The chain runs to 376 residues: Multicilin (376 aa).

The stretch at 165-213 (EQYWRDVADHNQKALGDALVENNQLQVSLTEKQEEIASLKEKNIQLNEL) forms a coiled coil. The tract at residues 230-261 (ERPKHSSGATQGRLPVKRSLEDFYPQSNEPDS) is disordered. The TIRT domain stretch occupies residues 331–376 (TELEEDVSFRTSIKEHSTIRTLAFPQGNAFTIRTAAGGYKFRWVPN).

This sequence belongs to the geminin family. Component of the EDM complex, at least composed of e2f4, e2f5, mcidas and tfdp1.

The protein localises to the nucleus. In terms of biological role, transcription regulator specifically required for multiciliate cell differentiation. Acts in a multiprotein complex containing e2f4 and e2f5 that binds and activate genes required for centriole biogenesis. Activates genes required for centriole assembly (plk4, cep152) and genes specifically required for motile cilia formation (foxj1). Also promotes the deuterosome pathway of centriole biogenesis by activating expression of deup1, but not its paralog cep63. The protein is Multicilin (mcidas) of Xenopus tropicalis (Western clawed frog).